Here is a 137-residue protein sequence, read N- to C-terminus: Cellular retinoic acid-binding protein 1 (137 aa).

Residues 21 to 31 carry the Nuclear localization signal motif; sequence KALGVNTMLRK. 132–134 serves as a coordination point for all-trans-retinoate; sequence RIY.

It belongs to the calycin superfamily. Fatty-acid binding protein (FABP) family.

It is found in the cytoplasm. In terms of biological role, cytosolic CRABPs may regulate the access of retinoic acid to the nuclear retinoic acid receptors. This chain is Cellular retinoic acid-binding protein 1 (crabp1), found in Takifugu rubripes (Japanese pufferfish).